Here is a 451-residue protein sequence, read N- to C-terminus: Protein tweety homolog 1-B (451 aa).

The Extracellular portion of the chain corresponds to 1 to 43; it reads MSTSHGYRASWWTYILHQVPHTNFQFEVVDNQFAPQEWSYQQA. The helical transmembrane segment at 44–64 threads the bilayer; sequence LLFLASIAGLCLAISLVLICV. Residues 65–86 lie on the Cytoplasmic side of the membrane; that stretch reads YLIKFCCCASQEDDDSKSHRVC. A helical membrane pass occupies residues 87–107; sequence CVTWSCVAAVIICCAGIGIGF. Residues 108–214 lie on the Extracellular side of the membrane; sequence YGNSETNDGV…QVNFIEDYRW (107 aa). A glycan (N-linked (GlcNAc...) asparagine) is linked at asparagine 128. Residues 215–235 form a helical membrane-spanning segment; sequence LAYILLLLLDLIICLFTLLSL. At 236–240 the chain is on the cytoplasmic side; that stretch reads AKQIK. Residues 241–261 traverse the membrane as a helical segment; that stretch reads WLVIVMTVVSFFVLLLSWGSM. The Extracellular segment spans residues 262–390; that stretch reads GLEMATAVGL…LKGLCYDGME (129 aa). Intrachain disulfides connect cysteine 275–cysteine 385 and cysteine 303–cysteine 370. N-linked (GlcNAc...) asparagine glycosylation is found at asparagine 284 and asparagine 355. The helical transmembrane segment at 391-411 threads the bilayer; it reads GILFLLLFSFLSALSFTAAVC. Over 412–451 the chain is Cytoplasmic; that stretch reads SLPRAWKRFRNRDLDYDDMDEDDPFNPQESKRFVQWQSSI.

This sequence belongs to the tweety family. In terms of assembly, homotetramer; disulfide-linked. Homodimer.

It is found in the cell membrane. The catalysed reaction is chloride(in) = chloride(out). It catalyses the reaction L-glutamate(out) = L-glutamate(in). In terms of biological role, may act as a calcium-independent, swelling-dependent volume-regulated anion channel (VRAC-swell) which plays a pivotal role in the process of regulatory volume decrease (RVD) in the brain through the efflux of anions like chloride and organic osmolytes like glutamate. This is Protein tweety homolog 1-B (ttyh1-b) from Xenopus laevis (African clawed frog).